A 174-amino-acid polypeptide reads, in one-letter code: Gamma-crystallin S (174 aa).

Beta/gamma crystallin 'Greek key' domains are found at residues 2–40 (GRIIFYEDKNFQGRRYECDSDCSDFHAFLNRCNSIRVES) and 41–83 (GAWV…KMIH). The segment at 84-89 (FVSGSE) is connecting peptide. Beta/gamma crystallin 'Greek key' domains are found at residues 90 to 130 (YKIQ…KVLD) and 131 to 173 (GIWI…KRLM).

It belongs to the beta/gamma-crystallin family.

Crystallins are the dominant structural components of the vertebrate eye lens. This is Gamma-crystallin S (crygs) from Cyprinus carpio (Common carp).